Here is a 294-residue protein sequence, read N- to C-terminus: Probable WRKY transcription factor 70 (294 aa).

The disordered stretch occupies residues 72–94 (SQNASCDNDGKFEDSGDSRKRLG). Over residues 79 to 91 (NDGKFEDSGDSRK) the composition is skewed to basic and acidic residues. Positions 90–97 (RKRLGPVK) match the Nuclear localization signal motif. Positions 114 to 182 (IESTILEDAF…YIGNHTCNTN (69 aa)) form a DNA-binding region, WRKY. The interval 201–229 (SEDHKSPSLSTSMKEEDNPHRHHGSSTEN) is disordered.

It belongs to the WRKY group III family. Interacts with WRKY30. Binds to BZR2/BES1 to cooperatively regulate the expression of target genes. Binds to unmodified (i.e. not sumoylated) NPR1. Post-translationally, phosphorylated and destabilized by ASK7/BIN2. In terms of tissue distribution, expressed in leaves and flowers.

It is found in the nucleus. Transcription factor involved in senescence, biotic and abiotic stress responses by modulating various phytohormones signaling pathways. Interacts specifically with the W box (5'-(T)TGAC[CT]-3'), a frequently occurring elicitor-responsive cis-acting element. Binds to the 5'-[CT]GACTTTT-3' motif in promoters of target genes to induce their expression. Binding to the W-box element of PR-1 promoter is mediated by not-sumoylated NPR1 in the absence of salicylic acid. Plays an important but not indispensable role in jasmonate and salicylic acid signaling. Positively regulates the salicylic acid (SA)-mediated signal pathway, but negatively the jasmonic acid (JA)-mediated signal pathway, thus determining the balance between these mutually antagonistic pathways. Together with WRKY46, WRKY53 and WRKY54, prevents defense response to the necrotrophic pathogens P.carotovorum and B.cinerea, but promotes defense responses (including SA-induced pathogenesis-related (PR) genes expression) against biotrophic/hemibiotrophic SA-monitored pathogens (e.g. P.syringae, E.carotovora subsp. carotovora SCC3193 and E.cichoracearum), probably by regulating negatively the JA/ET and positively the SA signaling pathways. Contributes to the suppression of jasmonic acid (MeJA)-induced expression of JA-responsive genes (e.g. PDF1.2). Promotes susceptibility to JA-monitored pathogens (e.g. A.brassicicola), probably by facilitating SA-controlled suppression of JA-mediated defense. Represses the biosynthesis of the phytoalexin camalexin and indol-3-ylmethyl glucosinolate (IGS). Represses both SA and JA/ethylene (ET) mediated defense marker genes expression. Negative regulator of SA biosynthesis. Negative regulator of EDS1-dependent defense against E.amylovora. Required for RPP4-mediated disease resistance and basal defense against H.parasitica, probably via late up-regulation (LURP) of resistance genes (e.g. CML10/CaBP22 and LURP1). Probably involved in defense responses toward insects (e.g. P.xylostella and B.brassicae). Together with WRKY54, negative regulator of developmental senescence, probably via the regulation of several senescence-associated markers genes. Together with WRKY46 and WRKY54, promotes brassinosteroid (BR)-regulated plant growth but prevent drought response by modulating gene expression. In collaboration with WRKY54, prevents stomatal closure and, consequently, osmotic stress tolerance. Regulates rhizobacterium B.cereus AR156-induced systemic resistance (ISR) to P.syringae pv. tomato DC3000. The sequence is that of Probable WRKY transcription factor 70 from Arabidopsis thaliana (Mouse-ear cress).